Reading from the N-terminus, the 370-residue chain is Probable dual-specificity RNA methyltransferase RlmN (370 aa).

The active-site Proton acceptor is the Glu91. Residues 97 to 329 (QHYGLSVCVT…KKNGVNCVVR (233 aa)) enclose the Radical SAM core domain. A disulfide bond links Cys104 and Cys340. Cys111, Cys115, and Cys118 together coordinate [4Fe-4S] cluster. Residues 163-164 (GE), Ser195, 218-220 (SLH), and Asn296 contribute to the S-adenosyl-L-methionine site. Residue Cys340 is the S-methylcysteine intermediate of the active site.

This sequence belongs to the radical SAM superfamily. RlmN family. It depends on [4Fe-4S] cluster as a cofactor.

The protein resides in the cytoplasm. It carries out the reaction adenosine(2503) in 23S rRNA + 2 reduced [2Fe-2S]-[ferredoxin] + 2 S-adenosyl-L-methionine = 2-methyladenosine(2503) in 23S rRNA + 5'-deoxyadenosine + L-methionine + 2 oxidized [2Fe-2S]-[ferredoxin] + S-adenosyl-L-homocysteine. It catalyses the reaction adenosine(37) in tRNA + 2 reduced [2Fe-2S]-[ferredoxin] + 2 S-adenosyl-L-methionine = 2-methyladenosine(37) in tRNA + 5'-deoxyadenosine + L-methionine + 2 oxidized [2Fe-2S]-[ferredoxin] + S-adenosyl-L-homocysteine. Functionally, specifically methylates position 2 of adenine 2503 in 23S rRNA and position 2 of adenine 37 in tRNAs. The sequence is that of Probable dual-specificity RNA methyltransferase RlmN from Streptococcus suis (strain 98HAH33).